The primary structure comprises 406 residues: Vacuole membrane protein 1 (406 aa).

The disordered stretch occupies residues 1-22; the sequence is MAENGTDCEQRRVGMPKEQNNG. The Cytoplasmic segment spans residues 1 to 42; it reads MAENGTDCEQRRVGMPKEQNNGSFQDPSFMCNRKRRDREERQ. A helical membrane pass occupies residues 43 to 63; the sequence is SIVLWRKPLITLQYFILEVLI. The Extracellular portion of the chain corresponds to 64–76; sequence NLKEWSVRLWHRR. Residues 77–97 traverse the membrane as a helical segment; that stretch reads MMVVSVLLLLAVLSVAYYIEG. Over 98-110 the chain is Cytoplasmic; it reads EHQQCVQYIEKKC. Residues 111-131 traverse the membrane as a helical segment; the sequence is LWCAYWVGLGILSSVGLGTGL. Residues 132-250 are Extracellular-facing; the sequence is HTFLLYLGPH…ATRAKLTVQN (119 aa). Residues 173–316 form a VTT domain region; sequence GTEGAISLWT…FVIITFSKHI (144 aa). The helical transmembrane segment at 251 to 271 threads the bilayer; the sequence is LVQKVGFLGILACASIPNPLF. At 272-273 the chain is on the cytoplasmic side; that stretch reads DL. A helical transmembrane segment spans residues 274–294; that stretch reads AGITCGHFLVPFWTFFGATLI. Topologically, residues 295-306 are extracellular; sequence GKAIIKMHIQKL. A helical transmembrane segment spans residues 307 to 327; sequence FVIITFSKHIVEQMVSLIGVI. The Cytoplasmic portion of the chain corresponds to 328–363; sequence PSIGPSLQKPFQEYLEAQRKKLHHKGDSGTPQSENW. A helical membrane pass occupies residues 364–384; sequence LSWAFEKLVIIMVFYFILSII. Residues 385-406 are Extracellular-facing; it reads NSMAQSYAKRVQQKKLSVEKTK.

This sequence belongs to the VMP1 family.

Its subcellular location is the endoplasmic reticulum-Golgi intermediate compartment membrane. The protein resides in the cell membrane. It localises to the vacuole membrane. The protein localises to the endoplasmic reticulum membrane. It carries out the reaction a 1,2-diacyl-sn-glycero-3-phospho-L-serine(in) = a 1,2-diacyl-sn-glycero-3-phospho-L-serine(out). It catalyses the reaction cholesterol(in) = cholesterol(out). The catalysed reaction is a 1,2-diacyl-sn-glycero-3-phosphocholine(in) = a 1,2-diacyl-sn-glycero-3-phosphocholine(out). The enzyme catalyses a 1,2-diacyl-sn-glycero-3-phosphoethanolamine(in) = a 1,2-diacyl-sn-glycero-3-phosphoethanolamine(out). Phospholipid scramblase involved in lipid homeostasis and membrane dynamics processes. Has phospholipid scramblase activity toward cholesterol and phosphatidylserine, as well as phosphatidylethanolamine and phosphatidylcholine. Required for autophagosome formation: participates in early stages of autophagosome biogenesis at the endoplasmic reticulum (ER) membrane by reequilibrating the leaflets of the ER as lipids are extracted by atg2 (atg2a or atg2b) to mediate autophagosome assembly. In addition to autophagy, involved in other processes in which phospholipid scramblase activity is required. Modulates ER contacts with lipid droplets, mitochondria and endosomes. This is Vacuole membrane protein 1 from Xenopus laevis (African clawed frog).